The primary structure comprises 166 residues: MISDESDRFNPRDPKPADAGKPSKSAKRREARQLATQALYQWHMARQSLNEIEAQFRVDNDFTDVDGAYFREILHGVPQFKTEIDNALTPCLDLAIEELDPVELAVLRLSTWELLKRVDVPYRVVINEGIELAKVFGSTDGHKFVNGVLDKLAPRLREAEVKAFKR.

Over residues methionine 1 to aspartate 18 the composition is skewed to basic and acidic residues. A disordered region spans residues methionine 1–glutamate 30.

This sequence belongs to the NusB family.

Its function is as follows. Involved in transcription antitermination. Required for transcription of ribosomal RNA (rRNA) genes. Binds specifically to the boxA antiterminator sequence of the ribosomal RNA (rrn) operons. The sequence is that of Transcription antitermination protein NusB from Pseudomonas fluorescens (strain Pf0-1).